Here is a 531-residue protein sequence, read N- to C-terminus: 2-isopropylmalate synthase (531 aa).

A Pyruvate carboxyltransferase domain is found at 8 to 284 (IIIFDTTLRD…LTNIDTKQIY (277 aa)). 4 residues coordinate Mn(2+): aspartate 17, histidine 208, histidine 210, and asparagine 244. Positions 408 to 531 (RVELVQVSCG…TQDKQTEVTA (124 aa)) are regulatory domain.

It belongs to the alpha-IPM synthase/homocitrate synthase family. LeuA type 1 subfamily. As to quaternary structure, homodimer. Requires Mn(2+) as cofactor.

The protein localises to the cytoplasm. It carries out the reaction 3-methyl-2-oxobutanoate + acetyl-CoA + H2O = (2S)-2-isopropylmalate + CoA + H(+). It participates in amino-acid biosynthesis; L-leucine biosynthesis; L-leucine from 3-methyl-2-oxobutanoate: step 1/4. In terms of biological role, catalyzes the condensation of the acetyl group of acetyl-CoA with 3-methyl-2-oxobutanoate (2-ketoisovalerate) to form 3-carboxy-3-hydroxy-4-methylpentanoate (2-isopropylmalate). This is 2-isopropylmalate synthase from Nostoc sp. (strain PCC 7120 / SAG 25.82 / UTEX 2576).